Consider the following 39-residue polypeptide: Neuropeptide F (39 aa).

At F39 the chain carries Phenylalanine amide.

The protein belongs to the NPY family. In terms of tissue distribution, neuronal somata and fibers.

Its subcellular location is the secreted. Functionally, may have an important physiological role in neuroregulation. In Cornu aspersum (Brown garden snail), this protein is Neuropeptide F.